A 525-amino-acid polypeptide reads, in one-letter code: Tigger transposable element-derived protein 2 (525 aa).

Residues 1–52 form the HTH psq-type domain; that stretch reads MLGKRKRVVLTIKDKLDIIKKLEEGISFKKLSVVYGIGESTVRDIKKNKERI. DNA-binding regions (H-T-H motif) lie at residues 28–48 and 100–132; these read FKKL…IKKN and TICA…FKQR. In terms of domain architecture, HTH CENPB-type spans 67-139; sequence KRKSMKSSTY…KQRHGIPKAA (73 aa). The region spanning 168–385 is the DDE-1 domain; the sequence is LQPEQIYGAD…VKSSTITKAW (218 aa). The interval 442–474 is disordered; it reads QVLTDSESAEDQTKAAEQKPSSKSRKTELNPEK.

It belongs to the tigger transposable element derived protein family.

It localises to the nucleus. This is Tigger transposable element-derived protein 2 (TIGD2) from Homo sapiens (Human).